The primary structure comprises 274 residues: Orotidine 5'-phosphate decarboxylase (274 aa).

Substrate contacts are provided by residues D40, 62-64 (KTH), 93-102 (DRKFVDIGNT), Y227, and R245. Residue K95 is the Proton donor of the active site.

Belongs to the OMP decarboxylase family.

The catalysed reaction is orotidine 5'-phosphate + H(+) = UMP + CO2. It participates in pyrimidine metabolism; UMP biosynthesis via de novo pathway; UMP from orotate: step 2/2. The polypeptide is Orotidine 5'-phosphate decarboxylase (URA3) (Coccidioides immitis (strain RS) (Valley fever fungus)).